The primary structure comprises 497 residues: Cytochrome P450 2D19 (497 aa).

Cysteine 443 is a heme binding site.

It belongs to the cytochrome P450 family. Heme serves as cofactor.

Its subcellular location is the endoplasmic reticulum membrane. It localises to the microsome membrane. The enzyme catalyses an organic molecule + reduced [NADPH--hemoprotein reductase] + O2 = an alcohol + oxidized [NADPH--hemoprotein reductase] + H2O + H(+). Functionally, responsible for the metabolism of many drugs and environmental chemicals that it oxidizes. This Callithrix jacchus (White-tufted-ear marmoset) protein is Cytochrome P450 2D19 (CYP2D19).